Consider the following 99-residue polypeptide: uncharacterized protein (99 aa).

The tract at residues 50-77 is disordered; the sequence is SAHWEDARSSGGTSPIRARAGSEGRGCQ.

This is an uncharacterized protein from Homo sapiens (Human).